The sequence spans 299 residues: Acidic endochitinase Pun g 14, amyloplastic (299 aa).

The N-terminal 26 residues, 1 to 26 (MAKTLPFSRALLLSLSILLVARAISA), are a transit peptide targeting the amyloplast. In terms of domain architecture, GH18 spans 27–299 (GDIAIYWGQN…TYSTTIKDQV (273 aa)). Intrachain disulfides connect Cys46/Cys93 and Cys76/Cys83. Residue Glu153 is the Proton donor of the active site. A disulfide bridge links Cys185 with Cys216.

Belongs to the glycosyl hydrolase 18 family. Chitinase class III subfamily. In terms of assembly, monomer. As to expression, highly expressed in seeds and to a lesser extent in the skin of the pomegranate fruit (at protein level). Not expressed in leaves or flesh of the fruit (at protein level).

The protein resides in the plastid. It localises to the amyloplast. It carries out the reaction Random endo-hydrolysis of N-acetyl-beta-D-glucosaminide (1-&gt;4)-beta-linkages in chitin and chitodextrins.. With respect to regulation, activity is not affected by addition of 10 mM Ca(2+) or removal of Ca(2+). Its function is as follows. Hydrolyzes chitin. Probable calcium storage protein of the seeds. Binds calcium ions with high capacity and low affinity. Involved in seed germination. This is Acidic endochitinase Pun g 14, amyloplastic from Punica granatum (Pomegranate).